Here is a 445-residue protein sequence, read N- to C-terminus: ATP-dependent protease ATPase subunit HslU (445 aa).

ATP is bound by residues I17, G59–E64, D254, E319, and R391.

Belongs to the ClpX chaperone family. HslU subfamily. A double ring-shaped homohexamer of HslV is capped on each side by a ring-shaped HslU homohexamer. The assembly of the HslU/HslV complex is dependent on binding of ATP.

The protein resides in the cytoplasm. In terms of biological role, ATPase subunit of a proteasome-like degradation complex; this subunit has chaperone activity. The binding of ATP and its subsequent hydrolysis by HslU are essential for unfolding of protein substrates subsequently hydrolyzed by HslV. HslU recognizes the N-terminal part of its protein substrates and unfolds these before they are guided to HslV for hydrolysis. The protein is ATP-dependent protease ATPase subunit HslU of Pseudomonas savastanoi pv. phaseolicola (strain 1448A / Race 6) (Pseudomonas syringae pv. phaseolicola (strain 1448A / Race 6)).